A 485-amino-acid polypeptide reads, in one-letter code: Noelin (485 aa).

An N-terminal signal peptide occupies residues 1–16 (MSVPLLKIGVVLSTMA). Asparagine 33, asparagine 103, asparagine 187, asparagine 288, asparagine 307, asparagine 394, asparagine 431, and asparagine 473 each carry an N-linked (GlcNAc...) asparagine glycan. Residues 87 to 225 (RDARTKQLRQ…ERLRACMQKL (139 aa)) adopt a coiled-coil conformation. The Olfactomedin-like domain occupies 226-478 (ACGKLTGISD…QILYNVTLFH (253 aa)). An intrachain disulfide couples cysteine 227 to cysteine 409.

In terms of assembly, homotetramer; disulfide-linked. Dimer of dimers, giving rise to a V-shaped homotretramer. Component of the AMPAR complex. In terms of processing, glycosylated.

It is found in the secreted. The protein localises to the synapse. The protein resides in the endoplasmic reticulum. Its subcellular location is the cell projection. It localises to the axon. It is found in the perikaryon. Functionally, contributes to the regulation of axonal growth. May play an important role in regulating the production of neural crest cells by the neural tube. The sequence is that of Noelin (OLFM1) from Gallus gallus (Chicken).